The sequence spans 425 residues: Ribosome biogenesis protein WDR12 homolog (425 aa).

A ubiquitin-like (UBL) domain region spans residues 7 to 93 (IQAKFFTKDE…ETIVHLEYLE (87 aa)). 7 WD repeats span residues 105–142 (IHDD…RRLT), 145–187 (GHLG…NAVE), 194–233 (GHAR…TDTD), 265–303 (GHHE…MKSQ), 305–344 (AGSK…GTIV), 350–390 (SHAG…APLY), and 394–425 (GHED…FEHK). The disordered stretch occupies residues 227–253 (PDSTDTDHGQDGSEEGSRKKQKTVDGK). A compositionally biased stretch (basic and acidic residues) spans 231–253 (DTDHGQDGSEEGSRKKQKTVDGK).

The protein belongs to the WD repeat WDR12/YTM1 family.

Its subcellular location is the nucleus. The protein localises to the nucleolus. The protein resides in the nucleoplasm. Required for maturation of ribosomal RNAs and formation of the large ribosomal subunit. The polypeptide is Ribosome biogenesis protein WDR12 homolog (Ixodes scapularis (Black-legged tick)).